A 546-amino-acid polypeptide reads, in one-letter code: MAAKDVRFSADARDKMLRGVDILADAVKVTLGPKGRNVVIEKSFGAPRITKDGVTVAKEIELADKFENMGAQMVREVASKTNDIAGDGTTTATVLAQAIVREGAKYVAAGINPMDLKRGIDLATQAAVKDIIARAKKVSTSDEVAQVGTISANGDKEIGEMIAHAMQKVGNEGVITVEEAKTAETELDVVEGMQFDRGYLSPYFITNAEKMVAELEDPYILIHEKKLSSLQAMLPVLEAVVQTGKPLLIIAEDIEGEALATLVVNKLRGGLKVAAVKAPGFGDRRKAMLEDIAILTKGQMIAEDLGIKLENVTLPMLGRAKRVRIEKENTTIIDGVGEKSDIEGRISQIKAQIEETTSDYDREKLQERLAKLAGGVAVIRVGGATEVEVKEKKDRVDDALNATRAAVEEGIVPGGGTALLRAKKAVAELKSDIPDVQAGIKIVLKALEAPLRQIAQNAGVEGSIVVGKITDNTSSETFGFNAQTEEYVDMIQAGIVDPAKVVRTALQDAASVAGLLVTTEAMVADAPKKDSPAPAMPGGGMGGMDF.

ATP is bound by residues 30-33 (TLGP), Lys51, 87-91 (DGTTT), Gly415, and Asp497. The tract at residues 527 to 546 (PKKDSPAPAMPGGGMGGMDF) is disordered. Residues 537–546 (PGGGMGGMDF) are compositionally biased toward gly residues.

This sequence belongs to the chaperonin (HSP60) family. As to quaternary structure, forms a cylinder of 14 subunits composed of two heptameric rings stacked back-to-back. Interacts with the co-chaperonin GroES.

The protein resides in the cytoplasm. The enzyme catalyses ATP + H2O + a folded polypeptide = ADP + phosphate + an unfolded polypeptide.. Together with its co-chaperonin GroES, plays an essential role in assisting protein folding. The GroEL-GroES system forms a nano-cage that allows encapsulation of the non-native substrate proteins and provides a physical environment optimized to promote and accelerate protein folding. The chain is Chaperonin GroEL from Methylobacterium radiotolerans (strain ATCC 27329 / DSM 1819 / JCM 2831 / NBRC 15690 / NCIMB 10815 / 0-1).